The following is a 488-amino-acid chain: Catalase (488 aa).

Residues 1 to 26 are disordered; sequence MTDRKNLTTNQGVPVGDNQNSMTAGR. The span at 7–23 shows a compositional bias: polar residues; that stretch reads LTTNQGVPVGDNQNSMT. Residues His-55 and Asn-128 contribute to the active site. Residue Tyr-338 participates in heme binding.

Belongs to the catalase family. It depends on heme as a cofactor.

The protein resides in the cytoplasm. It catalyses the reaction 2 H2O2 = O2 + 2 H2O. Functionally, decomposes hydrogen peroxide into water and oxygen; serves to protect cells from the toxic effects of hydrogen peroxide. The polypeptide is Catalase (kat) (Listeria monocytogenes serovar 1/2a (strain ATCC BAA-679 / EGD-e)).